Consider the following 204-residue polypeptide: Fruiting body protein SC7 (204 aa).

Residues Met-1 to Ala-16 form the signal peptide. The region spanning Leu-62–Tyr-185 is the SCP domain. N-linked (GlcNAc...) asparagine glycosylation is found at Asn-80, Asn-118, and Asn-134.

This sequence belongs to the CRISP family.

The protein resides in the secreted. In Schizophyllum commune (Split gill fungus), this protein is Fruiting body protein SC7 (SC7).